The chain runs to 267 residues: Cilia- and flagella-associated protein 300 (267 aa).

It belongs to the CFAP300 family. As to quaternary structure, interacts with DNAAF2. As to expression, expressed in nasal epithelial cells.

The protein resides in the cytoplasm. Its subcellular location is the cytoskeleton. It localises to the cilium axoneme. Cilium- and flagellum-specific protein that plays a role in axonemal structure organization and motility. May play a role in outer and inner dynein arm assembly. In Homo sapiens (Human), this protein is Cilia- and flagella-associated protein 300.